A 423-amino-acid chain; its full sequence is CDP-diacylglycerol--serine O-phosphatidyltransferase 2 (423 aa).

Helical transmembrane passes span 38–58, 77–97, 103–123, 195–215, 222–242, 294–314, 319–339, 359–379, and 390–410; these read PHTI…SGAL, WAMI…TILI, VWRL…FLLF, LLLW…RHML, WWDS…WAGM, FVQV…TFFL, WIPP…LIAI, GAFC…CMKF, and TWLI…LLAW.

Belongs to the CDP-alcohol phosphatidyltransferase class-I family.

The protein localises to the endoplasmic reticulum membrane. The enzyme catalyses a CDP-1,2-diacyl-sn-glycerol + L-serine = a 1,2-diacyl-sn-glycero-3-phospho-L-serine + CMP + H(+). The protein operates within phospholipid metabolism; phosphatidylethanolamine biosynthesis; phosphatidylethanolamine from CDP-diacylglycerol: step 1/2. In terms of biological role, catalyzes a base-exchange reaction in which the polar head group of phosphatidylethanolamine (PE) or phosphatidylcholine (PC) is replaced by L-serine. The protein is CDP-diacylglycerol--serine O-phosphatidyltransferase 2 (PSS2) of Oryza sativa subsp. japonica (Rice).